A 249-amino-acid chain; its full sequence is MLKPLTNQGFTNKVFYDDETNRFIKIKSYDGFNHKSDAFLLNNLDFCPKIFVDNKKELQTEWINGITLNESLLTDDILKTIGKNLITLHNSKLKFYKENQIARRFNIYRKKISSLNRKIPILDKYYKKINLFLRNIDNSAPVHNDLWLFNMIKVNDKIYFTDWEYATMGDVHFDLAYFIESSNLNEKQEKVFLDAYGDDFEPKYLFIHKILVNALIVLWINAHEVLPFDDSLYLNRVEKYMEQLEKEKE.

Belongs to the peptidase S49 family.

The chain is Protein LicA homolog (licA) from Metamycoplasma hominis (strain ATCC 23114 / DSM 25592 / NBRC 14850 / NCTC 10111 / PG21) (Mycoplasma hominis).